Consider the following 182-residue polypeptide: NADH-quinone oxidoreductase subunit I (182 aa).

4Fe-4S ferredoxin-type domains lie at 52–82 (LTRDPDGEERCVACNLCAVACPVGCISLQKA) and 92–121 (EFFRINFSRCIFCGLCEEACPTTAIQLTPD). Residues cysteine 62, cysteine 65, cysteine 68, cysteine 72, cysteine 101, cysteine 104, cysteine 107, and cysteine 111 each contribute to the [4Fe-4S] cluster site.

It belongs to the complex I 23 kDa subunit family. In terms of assembly, NDH-1 is composed of 13 different subunits. Subunits NuoA, H, J, K, L, M, N constitute the membrane sector of the complex. The cofactor is [4Fe-4S] cluster.

It is found in the cell inner membrane. The catalysed reaction is a quinone + NADH + 5 H(+)(in) = a quinol + NAD(+) + 4 H(+)(out). In terms of biological role, NDH-1 shuttles electrons from NADH, via FMN and iron-sulfur (Fe-S) centers, to quinones in the respiratory chain. The immediate electron acceptor for the enzyme in this species is believed to be ubiquinone. Couples the redox reaction to proton translocation (for every two electrons transferred, four hydrogen ions are translocated across the cytoplasmic membrane), and thus conserves the redox energy in a proton gradient. This Pseudomonas putida (strain ATCC 47054 / DSM 6125 / CFBP 8728 / NCIMB 11950 / KT2440) protein is NADH-quinone oxidoreductase subunit I.